The sequence spans 347 residues: Large ribosomal subunit protein uL10 (347 aa).

A disordered region spans residues alanine 312–glycine 347. Positions glutamate 325–glycine 338 are enriched in acidic residues.

Belongs to the universal ribosomal protein uL10 family. As to quaternary structure, part of the 50S ribosomal subunit. Forms part of the ribosomal stalk which helps the ribosome interact with GTP-bound translation factors. Forms a heptameric L10(L12)2(L12)2(L12)2 complex, where L10 forms an elongated spine to which the L12 dimers bind in a sequential fashion.

In terms of biological role, forms part of the ribosomal stalk, playing a central role in the interaction of the ribosome with GTP-bound translation factors. This is Large ribosomal subunit protein uL10 from Methanosarcina acetivorans (strain ATCC 35395 / DSM 2834 / JCM 12185 / C2A).